The chain runs to 538 residues: Bifunctional purine biosynthesis protein PurH (538 aa).

An MGS-like domain is found at 8–158; it reads IPAPDKVEIK…KNHAYVTILT (151 aa).

The protein belongs to the PurH family.

The enzyme catalyses (6R)-10-formyltetrahydrofolate + 5-amino-1-(5-phospho-beta-D-ribosyl)imidazole-4-carboxamide = 5-formamido-1-(5-phospho-D-ribosyl)imidazole-4-carboxamide + (6S)-5,6,7,8-tetrahydrofolate. The catalysed reaction is IMP + H2O = 5-formamido-1-(5-phospho-D-ribosyl)imidazole-4-carboxamide. It functions in the pathway purine metabolism; IMP biosynthesis via de novo pathway; 5-formamido-1-(5-phospho-D-ribosyl)imidazole-4-carboxamide from 5-amino-1-(5-phospho-D-ribosyl)imidazole-4-carboxamide (10-formyl THF route): step 1/1. The protein operates within purine metabolism; IMP biosynthesis via de novo pathway; IMP from 5-formamido-1-(5-phospho-D-ribosyl)imidazole-4-carboxamide: step 1/1. The sequence is that of Bifunctional purine biosynthesis protein PurH from Rhizobium leguminosarum bv. trifolii (strain WSM2304).